Consider the following 229-residue polypeptide: Putative ABC transporter permease protein ORF1 (229 aa).

The ABC transmembrane type-1 domain occupies 23–214; the sequence is ALNSLLVALA…LPSLAFFALV (192 aa). The next 5 helical transmembrane spans lie at 27–47, 62–82, 91–111, 150–170, and 194–214; these read LLVA…MAYV, WVVV…FLVL, LTGL…WMLA, ATAL…LVLL, and SPAG…FALV.

This sequence belongs to the binding-protein-dependent transport system permease family. MalFG subfamily.

Its subcellular location is the cell membrane. In terms of biological role, may participate in oleandomycin secretion during antibiotic production. The polypeptide is Putative ABC transporter permease protein ORF1 (Streptomyces antibioticus).